The sequence spans 418 residues: MYKRIKGTEDIFGDDIKYWYYIENVVKETVRLYGYSEIRTPIFEATELFIRSVGEETDIVQKEMYTFEDKGQRSITLRPEGTAPTIRAFIENSMMATGLPKRLFYIGPMFRYERPQKGRQRQFHQFGVELIGSPSPLADAEAIIVADRVLKNLGLLNYTIKINSIGCDKCRANYKNALKEYYSDKLDYVCDDCKRRYNTNVLRLLDCKVDVEYIKDAPKITDYLCDDCKHHYEETKRLLDNLKIKYVEDPLLVRGLDYYNGVVFEIHHGDLGAQSAVGGGGRYDKLIKELGGSQTPSLGFAMGIERLIIALKNEKIPVEEIKNNEIFVAHLGEQARIEALKIAEDLRDNGISVVFSTMERGLSAQLKHAARLKCKLCVIVGENELERNIVILRNMETGEQIEIERDYVVGTAKEWIEG.

Belongs to the class-II aminoacyl-tRNA synthetase family. Homodimer.

The protein localises to the cytoplasm. It carries out the reaction tRNA(His) + L-histidine + ATP = L-histidyl-tRNA(His) + AMP + diphosphate + H(+). The sequence is that of Histidine--tRNA ligase from Thermosipho africanus (strain TCF52B).